Reading from the N-terminus, the 448-residue chain is Fumarate hydratase class II (448 aa).

Substrate is bound by residues 83–85 (SGT), 113–116 (HPND), 123–125 (SSN), and T171. H172 serves as the catalytic Proton donor/acceptor. The active site involves S302. Residues S303 and 308 to 310 (KVN) each bind substrate.

The protein belongs to the class-II fumarase/aspartase family. Fumarase subfamily. Homotetramer.

The protein localises to the cytoplasm. It carries out the reaction (S)-malate = fumarate + H2O. Its pathway is carbohydrate metabolism; tricarboxylic acid cycle; (S)-malate from fumarate: step 1/1. Functionally, involved in the TCA cycle. Catalyzes the stereospecific interconversion of fumarate to L-malate. The protein is Fumarate hydratase class II of Blochmanniella floridana.